We begin with the raw amino-acid sequence, 1166 residues long: MPTSMLWAVDLFGRVYTLSTAGQYWELCKDVQLEFKRVSAATQCCWGIACDNQVYLYVCSSDVPIRHREEAYENQRWNPMGGFCEKLLPSDRWSWSDVSGLQHRPLDGVALPSPYWEWESDWYVDENFGGEPTEKGGWTYAMDFPATYTRDKKWNSCVRRRKWIRYRRYKSRDTWAKIPSKDDPKELPDPFNDLSVGGWEITEEPVGRLSVWAVSLQGKVWYRENVSHPNPEGSSWSLVDTPGEVVQISCGPHDLIWATLWEGQALVREGICRNNPKGNSWSIVEPPGSENGIMHVSAGVSVVWAITKDRKVWFRRGVNSHNPCGTSWIEMVGEMTMVNVGLNDQVWGISCEDRAVYFRQGVTPSELSGKTWKAIVVGRESDRSHSGSSSSLLSAGCFFGEEVRGSGTESAPSDTDASSEVERQGPERSLPKESLDNSRNLKGSSSKGHESTRNTEDPMENACLAEGQAKAPKTSGPDECHGPAPTPAELPWTNIDLKEPKKASNQPAAGFPETSGLSSLGLFPMGMEEPYGADDHPLWAWVSGGGCAVEAGSALKWFTVQSGLSPSVQTLSLSITPAQTAAWRKQIFQQLTERTKRELESFRHYEQAVEQSVWVKTGALQWWCDWKPHKWVDVRVALEQFTGHDGARDSILFIYYVVHEEKKYLHVFLNEVTVLVPVLNEAKHSFALYTPERTRQRWPVRLAATTEQDMNDWLTLLSLSCCESRKVHGRPSLQAIWSVTCKGDIFVSEPSPDLEAHEHLLPCDQMFWRQMGGHLRIIEANSRGVVWGIGYDHTAWVYTGGYGGGCFQGLASSTSNIYTQSDVKSVYIYENQRWNPVTGYTSRGLPTDRYMWSDVTGLQECTKAGTKPPSLQWTWVSDWYVDFSVLGGTDQEGWQYASDFPASYHGYKTMKDFVRRRCWARKCKLVTSGPWLEVAPIALSDVSIIPESADANGRGHNIALWAVSDKGDVLCRLGVSELNPAGSSWLHVGTDQPFASVSIGACYQVWAVARDGSAFYRGSVSPSQPAGDCWYHIPSPPKQKLTQVSVGQTSVYALDENGNLWYRAGITPSYPQGSSWEHVSNNVRKVSVGPLDQVWVIANKVQGSHGLSRGTVCRRMGVQPREPKGQGWDYGIGGGWDHISVRANATRAPRNMSRDQEAHGPGPVCC.

TECPR repeat units lie at residues 209–240 (LSVW…SLVD), 254–285 (DLIW…SIVE), 301–332 (SVVW…IEMV), and 344–376 (DQVW…KAIV). Residues S386, S388, S391, S413, and S418 each carry the phosphoserine modification. A disordered region spans residues 403-492 (VRGSGTESAP…PAPTPAELPW (90 aa)). Residues 407-418 (GTESAPSDTDAS) are compositionally biased toward polar residues. Over residues 420–436 (EVERQGPERSLPKESLD) the composition is skewed to basic and acidic residues. Over residues 437–446 (NSRNLKGSSS) the composition is skewed to polar residues. Residues 447–456 (KGHESTRNTE) are compositionally biased toward basic and acidic residues. The PH domain occupies 616–722 (KTGALQWWCD…WLTLLSLSCC (107 aa)). One copy of the TECPR 5 repeat lies at 734 to 761 (QAIWSVTCKGDIFVSEPSPDLEAHEHLL). S943 is modified (phosphoserine). 4 TECPR repeats span residues 958–989 (IALW…LHVG), 1003–1034 (YQVW…YHIP), 1049–1080 (TSVY…EHVS), and 1092–1132 (DQVW…DYGI). A disordered region spans residues 1147–1166 (RAPRNMSRDQEAHGPGPVCC).

It belongs to the TECPR1 family. As to quaternary structure, interacts with ATG5; the interaction is direct. Interacts with WIPI2. Interacts with the ATG5-ATG12 conjugate, the interaction is however mutually exclusive with ATG16, since it does not interact with ATG12-ATG5-ATG16 complex.

It is found in the cytoplasmic vesicle. The protein localises to the autophagosome membrane. It localises to the lysosome membrane. Tethering factor involved in autophagy. Involved in autophagosome maturation by promoting the autophagosome fusion with lysosomes: acts by associating with both the ATG5-ATG12 conjugate and phosphatidylinositol-3-phosphate (PtdIns(3)P) present at the surface of autophagosomes. Also involved in selective autophagy against bacterial pathogens, by being required for phagophore/preautophagosomal structure biogenesis and maturation. The polypeptide is Tectonin beta-propeller repeat-containing protein 1 (Tecpr1) (Rattus norvegicus (Rat)).